We begin with the raw amino-acid sequence, 82 residues long: Zinc finger CCCH domain-containing protein 13 (82 aa).

C3H1-type zinc fingers lie at residues 9–37 (RPGE…HPKN) and 55–82 (RPGQ…DHFT).

The polypeptide is Zinc finger CCCH domain-containing protein 13 (Arabidopsis thaliana (Mouse-ear cress)).